Reading from the N-terminus, the 293-residue chain is Elongation factor Ts (293 aa).

Positions 80–83 (TDFV) are involved in Mg(2+) ion dislocation from EF-Tu.

Belongs to the EF-Ts family.

It localises to the cytoplasm. Functionally, associates with the EF-Tu.GDP complex and induces the exchange of GDP to GTP. It remains bound to the aminoacyl-tRNA.EF-Tu.GTP complex up to the GTP hydrolysis stage on the ribosome. In Burkholderia thailandensis (strain ATCC 700388 / DSM 13276 / CCUG 48851 / CIP 106301 / E264), this protein is Elongation factor Ts.